The following is a 295-amino-acid chain: Bifunctional protein FolD (295 aa).

NADP(+)-binding positions include 166–168, serine 195, and isoleucine 236; that span reads GRS.

It belongs to the tetrahydrofolate dehydrogenase/cyclohydrolase family. Homodimer.

It carries out the reaction (6R)-5,10-methylene-5,6,7,8-tetrahydrofolate + NADP(+) = (6R)-5,10-methenyltetrahydrofolate + NADPH. The catalysed reaction is (6R)-5,10-methenyltetrahydrofolate + H2O = (6R)-10-formyltetrahydrofolate + H(+). Its pathway is one-carbon metabolism; tetrahydrofolate interconversion. In terms of biological role, catalyzes the oxidation of 5,10-methylenetetrahydrofolate to 5,10-methenyltetrahydrofolate and then the hydrolysis of 5,10-methenyltetrahydrofolate to 10-formyltetrahydrofolate. In Pelodictyon phaeoclathratiforme (strain DSM 5477 / BU-1), this protein is Bifunctional protein FolD.